We begin with the raw amino-acid sequence, 232 residues long: MGQKVNPIGLRLGINRNWESRWFPAKERTADFIAEDYKIRKFLKKELFYAGVSNIIIERTAKKLRINIITARPGIIIGKKGADIEKLKTTLVKMLGKDVAINIKEEKRPQASGQLAAENVATQLERRVAFRRAMKKVIQGALKSGAKGIKISVSGRLGGAEMARTEWYLEGRVPLHTLRAKIDYGFAEAQTTYGIIGIKVWIFKGEVLAKGIQPEPAEEKKGGRRPSRKRGE.

One can recognise a KH type-2 domain in the interval 39–107 (IRKFLKKELF…DVAINIKEEK (69 aa)). Positions 213 to 232 (QPEPAEEKKGGRRPSRKRGE) are disordered. Over residues 222 to 232 (GGRRPSRKRGE) the composition is skewed to basic residues.

Belongs to the universal ribosomal protein uS3 family. In terms of assembly, part of the 30S ribosomal subunit. Forms a tight complex with proteins S10 and S14.

Binds the lower part of the 30S subunit head. Binds mRNA in the 70S ribosome, positioning it for translation. This chain is Small ribosomal subunit protein uS3, found in Sulfurovum sp. (strain NBC37-1).